The chain runs to 185 residues: Ribosome-recycling factor (185 aa).

Belongs to the RRF family.

It localises to the cytoplasm. In terms of biological role, responsible for the release of ribosomes from messenger RNA at the termination of protein biosynthesis. May increase the efficiency of translation by recycling ribosomes from one round of translation to another. In Frankia alni (strain DSM 45986 / CECT 9034 / ACN14a), this protein is Ribosome-recycling factor.